We begin with the raw amino-acid sequence, 435 residues long: uncharacterized protein (435 aa).

A run of 12 helical transmembrane segments spans residues 26-46, 61-81, 96-116, 119-139, 150-170, 177-197, 242-262, 281-301, 325-345, 347-367, 385-405, and 407-427; these read LLSGIIILNYFDRVAISVAAP, IVFSIYTYSYTLMQLPVGSLL, IWSFLTILLAFLQGKLLLYLF, LIGLTSASAFPAASKATALWF, LFDSAAKFSNVIGAPLVAFLV, VAFLTIGCINVLFTIFFWQYY, VWGLMIGFTGYGYTFNLLLTW, FTAVPWLISTISGIAVGGWLV, FGFFFLGSILTNNITVAIICI, IGLAGISATAPVGWSISAELA, LFGGIIAASLTGYLFDVTGSF, and LSFLVAGFVLLLGLVFYVFVL.

It belongs to the major facilitator superfamily. Phthalate permease family.

The protein resides in the cell membrane. This is an uncharacterized protein from Bacillus subtilis (strain 168).